We begin with the raw amino-acid sequence, 195 residues long: Acireductone dioxygenase 2 (195 aa).

Fe(2+)-binding residues include His94, His96, Glu100, and His139. Ni(2+) contacts are provided by His94, His96, Glu100, and His139.

It belongs to the acireductone dioxygenase (ARD) family. It depends on Fe(2+) as a cofactor. Ni(2+) is required as a cofactor.

Its subcellular location is the cytoplasm. It is found in the nucleus. The catalysed reaction is 1,2-dihydroxy-5-(methylsulfanyl)pent-1-en-3-one + O2 = 4-methylsulfanyl-2-oxobutanoate + formate + 2 H(+). The enzyme catalyses 1,2-dihydroxy-5-(methylsulfanyl)pent-1-en-3-one + O2 = 3-(methylsulfanyl)propanoate + CO + formate + 2 H(+). The protein operates within amino-acid biosynthesis; L-methionine biosynthesis via salvage pathway; L-methionine from S-methyl-5-thio-alpha-D-ribose 1-phosphate: step 5/6. Catalyzes 2 different reactions between oxygen and the acireductone 1,2-dihydroxy-3-keto-5-methylthiopentene (DHK-MTPene) depending upon the metal bound in the active site. Fe-containing acireductone dioxygenase (Fe-ARD) produces formate and 2-keto-4-methylthiobutyrate (KMTB), the alpha-ketoacid precursor of methionine in the methionine recycle pathway. Ni-containing acireductone dioxygenase (Ni-ARD) produces methylthiopropionate, carbon monoxide and formate, and does not lie on the methionine recycle pathway. The protein is Acireductone dioxygenase 2 of Physcomitrium patens (Spreading-leaved earth moss).